A 119-amino-acid polypeptide reads, in one-letter code: Holo-[acyl-carrier-protein] synthase (119 aa).

Mg(2+) is bound by residues Asp-8 and Glu-59.

Belongs to the P-Pant transferase superfamily. AcpS family. Mg(2+) serves as cofactor.

Its subcellular location is the cytoplasm. The enzyme catalyses apo-[ACP] + CoA = holo-[ACP] + adenosine 3',5'-bisphosphate + H(+). Transfers the 4'-phosphopantetheine moiety from coenzyme A to a Ser of acyl-carrier-protein. This Lactococcus lactis subsp. cremoris (strain SK11) protein is Holo-[acyl-carrier-protein] synthase.